A 100-amino-acid polypeptide reads, in one-letter code: Enhancer of yellow 2 transcription factor (100 aa).

It belongs to the ENY2 family. In terms of assembly, component of the nuclear pore complex (NPC)-associated AMEX complex (anchoring and mRNA export complex), composed of at least e(y)2 and xmas-2. Component of the SAGA transcription coactivator-HAT complexes, at least composed of Ada2b, e(y)2, Pcaf/Gcn5, Taf10 and Nipped-A/Trrap. Within the SAGA complex, e(y)2, Sgf11, and not/nonstop form an additional subcomplex of SAGA called the DUB module (deubiquitination module). Component of the THO complex, composed of at least e(y)2, HPR1, THO2, THOC5, THOC6 and THOC7. Interacts with e(y)1. Interacts with su(Hw) (via zinc fingers). Interacts with xmas-2; required for localization to the nuclear periphery. Interacts with the nuclear pore complex (NPC).

The protein localises to the nucleus. The protein resides in the nucleoplasm. It is found in the cytoplasm. Functionally, involved in mRNA export coupled transcription activation by association with both the AMEX and the SAGA complexes. The SAGA complex is a multiprotein complex that activates transcription by remodeling chromatin and mediating histone acetylation and deubiquitination. Within the SAGA complex, participates in a subcomplex that specifically deubiquitinates histone H2B. The SAGA complex is recruited to specific gene promoters by activators, where it is required for transcription. Required for nuclear receptor-mediated transactivation. Involved in transcription elongation by recruiting the THO complex onto nascent mRNA. The AMEX complex functions in docking export-competent ribonucleoprotein particles (mRNPs) to the nuclear entrance of the nuclear pore complex (nuclear basket). AMEX participates in mRNA export and accurate chromatin positioning in the nucleus by tethering genes to the nuclear periphery. The protein is Enhancer of yellow 2 transcription factor of Drosophila pseudoobscura pseudoobscura (Fruit fly).